Here is a 446-residue protein sequence, read N- to C-terminus: tRNA-2-methylthio-N(6)-dimethylallyladenosine synthase (446 aa).

Residues 3–124 enclose the MTTase N-terminal domain; it reads KKLYIKTYGC…LPELISKVVR (122 aa). [4Fe-4S] cluster contacts are provided by cysteine 12, cysteine 48, cysteine 87, cysteine 162, cysteine 166, and cysteine 169. The Radical SAM core domain occupies 148–380; it reads YPQGASAFIS…QKELSSQQLA (233 aa). Residues 383–446 enclose the TRAM domain; the sequence is ESCVGSTMKV…SNSLTGEIYT (64 aa).

The protein belongs to the methylthiotransferase family. MiaB subfamily. Monomer. The cofactor is [4Fe-4S] cluster.

It is found in the cytoplasm. The catalysed reaction is N(6)-dimethylallyladenosine(37) in tRNA + (sulfur carrier)-SH + AH2 + 2 S-adenosyl-L-methionine = 2-methylsulfanyl-N(6)-dimethylallyladenosine(37) in tRNA + (sulfur carrier)-H + 5'-deoxyadenosine + L-methionine + A + S-adenosyl-L-homocysteine + 2 H(+). Catalyzes the methylthiolation of N6-(dimethylallyl)adenosine (i(6)A), leading to the formation of 2-methylthio-N6-(dimethylallyl)adenosine (ms(2)i(6)A) at position 37 in tRNAs that read codons beginning with uridine. This chain is tRNA-2-methylthio-N(6)-dimethylallyladenosine synthase, found in Rickettsia canadensis (strain McKiel).